A 428-amino-acid chain; its full sequence is Cyclic AMP-responsive element-binding protein 3-like protein 3-A (428 aa).

Residues 1 to 286 are Cytoplasmic-facing; it reads MENYSDQGGD…VMNGSNKPVQ (286 aa). A compositionally biased stretch (low complexity) spans 67–83; sequence VSGSPVWSPSPSDSGIS. The interval 67–104 is disordered; the sequence is VSGSPVWSPSPSDSGISEDPHSDHIDSPPPNASPPMEP. The span at 93–103 shows a compositional bias: pro residues; sequence SPPPNASPPME. The region spanning 210 to 273 is the bZIP domain; that stretch reads ILKKIRRKIR…ISLMEQLRRL (64 aa). Residues 212–241 form a basic motif region; it reads KKIRRKIRNKQSAQESRKKKKEYIDGLESR. The tract at residues 252–273 is leucine-zipper; the sequence is LQRKVFQLEKCNISLMEQLRRL. The helical; Signal-anchor for type II membrane protein transmembrane segment at 287–303 threads the bilayer; sequence AGTCVLVLLLSFTLILL. Residues 304–428 are Lumenal-facing; it reads PNLKPFTDTK…SRRSPHADDM (125 aa). Positions 381-428 are disordered; sequence TEYDPESHNHSFDQHDEHHHGDPITGHVATVTLNPRRGSRRSPHADDM. Residues 385 to 402 are compositionally biased toward basic and acidic residues; the sequence is PESHNHSFDQHDEHHHGD. N-linked (GlcNAc...) asparagine glycosylation is present at asparagine 389.

Belongs to the bZIP family. ATF subfamily. Binds DNA as a dimer. Controlled by regulated intramembrane proteolysis (RIP). A fragment containing the cytoplasmic transcription factor domain is released by proteolysis. The cleavage seems to be performed sequentially by site-1 and site-2 proteases.

It localises to the endoplasmic reticulum membrane. The protein localises to the nucleus. In terms of biological role, transcriptional activator. Binds the cAMP response element (CRE). Activates transcription through box-B element and CRE. Seems to function synergistically with atf6. Regulates FGF21 transcription. In Danio rerio (Zebrafish), this protein is Cyclic AMP-responsive element-binding protein 3-like protein 3-A (creb3l3a).